The chain runs to 269 residues: Phosphate import ATP-binding protein PstB (269 aa).

Residues 14-253 (LSLENVSISY…EFNSTKKIFN (240 aa)) enclose the ABC transporter domain. ATP is bound at residue 46 to 53 (GPSGCGKS).

This sequence belongs to the ABC transporter superfamily. Phosphate importer (TC 3.A.1.7) family. In terms of assembly, the complex is composed of two ATP-binding proteins (PstB), two transmembrane proteins (PstC and PstA) and a solute-binding protein (PstS).

It localises to the cell inner membrane. The catalysed reaction is phosphate(out) + ATP + H2O = ADP + 2 phosphate(in) + H(+). Its function is as follows. Part of the ABC transporter complex PstSACB involved in phosphate import. Responsible for energy coupling to the transport system. The polypeptide is Phosphate import ATP-binding protein PstB (Prochlorococcus marinus (strain MIT 9312)).